The chain runs to 771 residues: MSVHATDAKPPGPSPADQLLDGLNPQQRQAVVHEGSPLLIVAGAGSGKTAVLTRRIAYLMAARGVGVGQILAITFTNKAAAEMRERVVGLVGEKARYMWVSTFHSTCVRILRNQAALIEGLNSNFSIYDADDSRRLLQMVGRDLGLDIKRYSPRLLANAISNLKNELIDPHQALAGLTEDSDDLARAVASVYDEYQRRLRAANALDFDDLIGETVAVLQAFPQIAQYYRRRFRHVLVDEYQDTNHAQYVLVRELVGRDSNDGIPPGELCVVGDADQSIYAFRGATIRNIEDFERDYPDTRTILLEQNYRSTQNILSAANSVIARNAGRREKRLWTDAGAGELIVGYVADNEHDEARFVAEEIDALAEGSEITYNDVAVFYRTNNSSRSLEEVLIRAGIPYKVVGGVRFYERKEIRDIVAYLRVLDNPGDAVSLRRILNTPRRGIGDRAEACVAVYAENTGVGFGDALVAAAQGKVPMLNTRAEKAIAGFVEMFDELRGRLDDDLGELVEAVLERTGYRRELEASTDPQELARLDNLNELVSVAHEFSTDRENAAALGPDDEDVPDTGVLADFLERVSLVADADEIPEHGAGVVTLMTLHTAKGLEFPVVFVTGWEDGMFPHMRALDNPTELSEERRLAYVGITRARQRLYVSRAIVRSSWGQPMLNPESRFLREIPQELIDWRRTAPKPSFSAPVSGAGRFGSARPSPTRSGASRRPLLVLQVGDRVTHDKYGLGRVEEVSGVGESAMSLIDFGSSGRVKLMHNHAPVTKL.

Residues 1–21 are disordered; sequence MSVHATDAKPPGPSPADQLLD. The UvrD-like helicase ATP-binding domain maps to 21–311; that stretch reads DGLNPQQRQA…ILLEQNYRST (291 aa). ATP is bound by residues 45 to 50 and Arg309; that span reads GSGKTA. One can recognise a UvrD-like helicase C-terminal domain in the interval 312–603; that stretch reads QNILSAANSV…TLMTLHTAKG (292 aa). Residues 691–716 are disordered; sequence FSAPVSGAGRFGSARPSPTRSGASRR.

It belongs to the helicase family. UvrD subfamily. Monomer. Mg(2+) is required as a cofactor.

The catalysed reaction is Couples ATP hydrolysis with the unwinding of duplex DNA by translocating in the 3'-5' direction.. It carries out the reaction ATP + H2O = ADP + phosphate + H(+). Functionally, DNA-dependent ATPase, acting on dsDNA with a 3'-ssDNA tail, unwinding with 3'-to 5'-polarity. Also highly efficient on nicked DNA. Involved in the post-incision events of nucleotide excision repair. This Mycobacterium bovis (strain ATCC BAA-935 / AF2122/97) protein is ATP-dependent DNA helicase UvrD1 (uvrD1).